The primary structure comprises 942 residues: Eukaryotic translation initiation factor 3 subunit A (942 aa).

In terms of domain architecture, PCI spans 320 to 494; the sequence is FKKYSSIILL…NTVTFFKDPF (175 aa). Coiled coils occupy residues 499–529, 588–669, 705–734, and 821–912; these read KAAGTVEEEEEEEEEEGEEVEGEEAETGEEI, ITQT…KQRE, SKLSQDKSELEDRMTSSLQKLDHAERAYRK, and IEEV…RKAQ. Positions 502–546 are disordered; the sequence is GTVEEEEEEEEEEGEEVEGEEAETGEEIVEEGEEHENEENKEPEP. The span at 504-538 shows a compositional bias: acidic residues; that stretch reads VEEEEEEEEEEGEEVEGEEAETGEEIVEEGEEHEN. 2 stretches are compositionally biased toward basic and acidic residues: residues 836–870 and 889–911; these read RKAEIEAEEREERAKKQEETARKQKEMEEAAERKS and RSAKLDEIARRQREIEQAAERKA. Residues 836–942 form a disordered region; that stretch reads RKAEIEAEER…KMKLRRASKK (107 aa).

It belongs to the eIF-3 subunit A family. As to quaternary structure, component of the eukaryotic translation initiation factor 3 (eIF-3) complex.

Its subcellular location is the cytoplasm. Functionally, RNA-binding component of the eukaryotic translation initiation factor 3 (eIF-3) complex, which is involved in protein synthesis of a specialized repertoire of mRNAs and, together with other initiation factors, stimulates binding of mRNA and methionyl-tRNAi to the 40S ribosome. The eIF-3 complex specifically targets and initiates translation of a subset of mRNAs involved in cell proliferation. The polypeptide is Eukaryotic translation initiation factor 3 subunit A (Vanderwaltozyma polyspora (strain ATCC 22028 / DSM 70294 / BCRC 21397 / CBS 2163 / NBRC 10782 / NRRL Y-8283 / UCD 57-17) (Kluyveromyces polysporus)).